We begin with the raw amino-acid sequence, 345 residues long: Anthranilate phosphoribosyltransferase 1 (345 aa).

5-phospho-alpha-D-ribose 1-diphosphate contacts are provided by residues G86, 89-90, T94, 96-99, 114-122, and S126; these read GD, NIST, and KHGGRGVSS. G86 contributes to the anthranilate binding site. S98 provides a ligand contact to Mg(2+). R172 is an anthranilate binding site. Mg(2+) is bound by residues D231 and E232.

Belongs to the anthranilate phosphoribosyltransferase family. As to quaternary structure, homodimer. The cofactor is Mg(2+).

The enzyme catalyses N-(5-phospho-beta-D-ribosyl)anthranilate + diphosphate = 5-phospho-alpha-D-ribose 1-diphosphate + anthranilate. It functions in the pathway amino-acid biosynthesis; L-tryptophan biosynthesis; L-tryptophan from chorismate: step 2/5. In terms of biological role, catalyzes the transfer of the phosphoribosyl group of 5-phosphorylribose-1-pyrophosphate (PRPP) to anthranilate to yield N-(5'-phosphoribosyl)-anthranilate (PRA). The chain is Anthranilate phosphoribosyltransferase 1 from Ralstonia nicotianae (strain ATCC BAA-1114 / GMI1000) (Ralstonia solanacearum).